The primary structure comprises 201 residues: Urease accessory protein UreG (201 aa).

GTP is bound at residue glycine 12–threonine 19.

Belongs to the SIMIBI class G3E GTPase family. UreG subfamily. As to quaternary structure, homodimer. UreD, UreF and UreG form a complex that acts as a GTP-hydrolysis-dependent molecular chaperone, activating the urease apoprotein by helping to assemble the nickel containing metallocenter of UreC. The UreE protein probably delivers the nickel.

The protein resides in the cytoplasm. In terms of biological role, facilitates the functional incorporation of the urease nickel metallocenter. This process requires GTP hydrolysis, probably effectuated by UreG. This chain is Urease accessory protein UreG, found in Dechloromonas aromatica (strain RCB).